Here is a 467-residue protein sequence, read N- to C-terminus: Probable Xaa-Pro aminopeptidase pepP (467 aa).

Positions 264, 275, 398, and 438 each coordinate Mn(2+).

This sequence belongs to the peptidase M24B family. Mn(2+) serves as cofactor.

It carries out the reaction Release of any N-terminal amino acid, including proline, that is linked to proline, even from a dipeptide or tripeptide.. In terms of biological role, catalyzes the removal of a penultimate prolyl residue from the N-termini of peptides. The protein is Probable Xaa-Pro aminopeptidase pepP (pepP) of Neosartorya fischeri (strain ATCC 1020 / DSM 3700 / CBS 544.65 / FGSC A1164 / JCM 1740 / NRRL 181 / WB 181) (Aspergillus fischerianus).